We begin with the raw amino-acid sequence, 421 residues long: Trimethyllysine dioxygenase, mitochondrial (421 aa).

The N-terminal 15 residues, 1-15 (MWCHRLSHLQSRLQD), are a transit peptide targeting the mitochondrion. The residue at position 236 (K236) is an N6-acetyllysine. H242, D244, and H389 together coordinate Fe cation.

The protein belongs to the gamma-BBH/TMLD family. In terms of assembly, homodimer. The cofactor is Fe(2+). Requires L-ascorbate as cofactor.

The protein resides in the mitochondrion matrix. It catalyses the reaction N(6),N(6),N(6)-trimethyl-L-lysine + 2-oxoglutarate + O2 = (3S)-3-hydroxy-N(6),N(6),N(6)-trimethyl-L-lysine + succinate + CO2. It functions in the pathway amine and polyamine biosynthesis; carnitine biosynthesis. In terms of biological role, converts trimethyllysine (TML) into hydroxytrimethyllysine (HTML). This Bos taurus (Bovine) protein is Trimethyllysine dioxygenase, mitochondrial (TMLHE).